We begin with the raw amino-acid sequence, 392 residues long: Ceramide phosphoethanolamine synthase (392 aa).

Residues 1-10 (MIGPSSQISK) are Lumenal-facing. Residues 11–31 (ILLTLLFLLIIFYVFMDVELY) traverse the membrane as a helical segment. Residues 32–140 (LRIHNYAIER…MFDNVIGFSR (109 aa)) lie on the Cytoplasmic side of the membrane. Low complexity predominate over residues 59-82 (SESGSGSIGGSSSSSSSSSSSTST). Residues 59–91 (SESGSGSIGGSSSSSSSSSSSTSTKLPTAGDRQ) are disordered. The chain crosses the membrane as a helical span at residues 141–161 (STFITPNMISFFHVGVACLAG). Over 162-212 (KLVASDSLGYRRLGVLLFQIRTFLDDLDGHVARVRKHIRGERSEIGTSGYY) the chain is Lumenal. A helical transmembrane segment spans residues 213-233 (VDGLCDGLGCIALLLGIFFYL). The Cytoplasmic segment spans residues 234–271 (KNNPPRRGYSIIPMSDSKLPEPTMMIPKMKATTRKVAK). Residues 272–288 (NVISFTGQLLLSSTAWN) traverse the membrane as a helical segment. Over 289–319 (RYIAVYQNMLEREDVSGNQSHCQDYVFKSTW) the chain is Lumenal. The chain crosses the membrane as a helical span at residues 320-340 (FFCVAWMWRIVNVHALLHCVL). At 341 to 356 (LSIFCDKLWDFLRAIR) the chain is on the cytoplasmic side. The chain crosses the membrane as a helical span at residues 357–377 (YSGYIILLVAICLTEMHILEA). The Lumenal portion of the chain corresponds to 378–392 (QNYIFNSTACSNISL).

The protein belongs to the CDP-alcohol phosphatidyltransferase class-I family. It depends on Mn(2+) as a cofactor.

It localises to the membrane. Its subcellular location is the golgi apparatus membrane. The protein resides in the cell membrane. The enzyme catalyses CDP-ethanolamine + an N-acylsphing-4-enine = an N-acylsphing-4-enine 1-phosphoethanolamine + CMP + H(+). It carries out the reaction CDP-ethanolamine + an N-acyl-sphingoid base = an N-acyl-sphingoid 1-phosphoethanolamine + CMP + H(+). Functionally, catalyzes the biosynthesis of ceramide phosphoethanolamine (CPE) through the transfer of a phosphatidyl head group from cytidine 5'-diphosphate (CDP)-ethanolamine on to the primary hydroxyl of ceramide. The protein is Ceramide phosphoethanolamine synthase of Drosophila melanogaster (Fruit fly).